The sequence spans 1056 residues: Kinesin-like protein KIF11 (1056 aa).

One can recognise a Kinesin motor domain in the interval 18–359 (NIQVVVRCRP…LEYAHRAKNI (342 aa)). Position 105–112 (105–112 (GQTGTGKT)) interacts with ATP. Position 146 is an N6-acetyllysine (Lys146). Coiled coils occupy residues 364-480 (EVNQ…KEEY) and 736-763 (LEEK…DIVN). Residue Thr458 is modified to Phosphothreonine. Residue Lys477 forms a Glycyl lysine isopeptide (Lys-Gly) (interchain with G-Cter in SUMO2) linkage. Residue Thr925 is modified to Phosphothreonine. Thr926 bears the Phosphothreonine; by CDK1 mark. Ser1033 is modified (phosphoserine; by NEK6). Lys1034 participates in a covalent cross-link: Glycyl lysine isopeptide (Lys-Gly) (interchain with G-Cter in ubiquitin).

Belongs to the TRAFAC class myosin-kinesin ATPase superfamily. Kinesin family. BimC subfamily. Interacts with the thyroid hormone receptor in the presence of thyroid hormone. Component of a large chromatin remodeling complex, at least composed of MYSM1, PCAF, RBM10 and KIF11/TRIP5. Interacts (via C-terminus) with the kinase NEK6 in both interphase and mitosis. Interacts with RARRES1 and AGBL2. Interacts with TPX2. Phosphorylated exclusively on serine during S phase, but on both serine and Thr-926 during mitosis, so controlling the association of KIF11 with the spindle apparatus (probably during early prophase). In terms of processing, a subset of this protein primarily localized at the spindle pole is phosphorylated by NEK6 during mitosis; phosphorylation is required for mitotic function. Post-translationally, ubiquitinated at Lys-1034 by UHRF1 via 'Lys-63'-linked ubiquitin chains, leading to interaction with spindle assembly factor TPX2, thereby ensuring accurate distribution to the spindles during metaphase.

It localises to the cytoplasm. It is found in the cytoskeleton. The protein localises to the spindle pole. In terms of biological role, motor protein required for establishing a bipolar spindle and thus contributing to chromosome congression during mitosis. Required in non-mitotic cells for transport of secretory proteins from the Golgi complex to the cell surface. The chain is Kinesin-like protein KIF11 (KIF11) from Homo sapiens (Human).